The chain runs to 170 residues: MYTSKQPFLKSKQPFSKSEQPFSKSEQPFRKSKQTFRKFKQPFRKSKQPFRRRPRIGPGDRIDYRNMSLINRFISEQGKILSRRINRLTLKQQRLITLAIKQARILSFLPFRNYENEKQFQAQSISIITGSRPRKNRHIPQLTQKYNSNRNLRNNNQNLRNNNRNLSSDC.

Disordered stretches follow at residues 1 to 60 (MYTS…GPGD) and 149 to 170 (NRNL…SSDC). Repeats lie at residues 4–10 (SKQPFLK), 11–17 (SKQPFSK), 18–24 (SEQPFSK), 25–31 (SEQPFRK), 32–38 (SKQTFRK), 39–45 (FKQPFRK), and 46–52 (SKQPFRR). The tract at residues 4–52 (SKQPFLKSKQPFSKSEQPFSKSEQPFRKSKQTFRKFKQPFRKSKQPFRR) is 7 X 7 AA tandem repeats. The span at 13–26 (QPFSKSEQPFSKSE) shows a compositional bias: polar residues. The span at 30-55 (RKSKQTFRKFKQPFRKSKQPFRRRPR) shows a compositional bias: basic residues.

It belongs to the bacterial ribosomal protein bS18 family. As to quaternary structure, part of the 30S ribosomal subunit.

Its subcellular location is the plastid. The protein localises to the chloroplast. In Secale cereale (Rye), this protein is Small ribosomal subunit protein bS18c (rps18).